The following is a 226-amino-acid chain: Large ribosomal subunit protein uL1 (226 aa).

The protein belongs to the universal ribosomal protein uL1 family. In terms of assembly, part of the 50S ribosomal subunit.

Functionally, binds directly to 23S rRNA. The L1 stalk is quite mobile in the ribosome, and is involved in E site tRNA release. Protein L1 is also a translational repressor protein, it controls the translation of the L11 operon by binding to its mRNA. The polypeptide is Large ribosomal subunit protein uL1 (Mycoplasma genitalium (strain ATCC 33530 / DSM 19775 / NCTC 10195 / G37) (Mycoplasmoides genitalium)).